Here is a 159-residue protein sequence, read N- to C-terminus: Testis-specific XK-related protein, Y-linked (159 aa).

3 helical membrane passes run 1–21 (MFIFNSIADDIFPLISCVGAI), 45–65 (IYLMIWHSLVIISPVVTLAFF), and 72–92 (GSLHFLLIIYFVLLLTPWLEF).

Belongs to the XK family. Testis specific.

Its subcellular location is the membrane. This chain is Testis-specific XK-related protein, Y-linked (XKRY), found in Homo sapiens (Human).